The primary structure comprises 487 residues: Betaine aldehyde dehydrogenase (487 aa).

K(+)-binding residues include Ser26 and Asp93. 150-152 (GAW) contacts NAD(+). Catalysis depends on Lys162, which acts as the Charge relay system. NAD(+) is bound by residues 176 to 179 (KPSE) and 229 to 232 (SVPT). Leu244 lines the K(+) pocket. Glu250 (proton acceptor) is an active-site residue. Positions 252, 284, and 384 each coordinate NAD(+). Cys284 functions as the Nucleophile in the catalytic mechanism. Position 284 is a cysteine sulfenic acid (-SOH) (Cys284). K(+) contacts are provided by Lys454 and Gly457. The active-site Charge relay system is Glu461.

This sequence belongs to the aldehyde dehydrogenase family. In terms of assembly, dimer of dimers. Requires K(+) as cofactor.

It carries out the reaction betaine aldehyde + NAD(+) + H2O = glycine betaine + NADH + 2 H(+). It participates in amine and polyamine biosynthesis; betaine biosynthesis via choline pathway; betaine from betaine aldehyde: step 1/1. Its function is as follows. Involved in the biosynthesis of the osmoprotectant glycine betaine. Catalyzes the irreversible oxidation of betaine aldehyde to the corresponding acid. In Rhizobium leguminosarum bv. trifolii (strain WSM2304), this protein is Betaine aldehyde dehydrogenase.